Here is a 756-residue protein sequence, read N- to C-terminus: Cholesterol uptake protein 1 (756 aa).

Positions 1-18 (MRTSQAIFILIFLDSVRN) are cleaved as a signal peptide. The Extracellular portion of the chain corresponds to 19–268 (QSPQVIPAKW…TIESSMKIFD (250 aa)). Residues asparagine 39 and asparagine 63 are each glycosylated (N-linked (GlcNAc...) asparagine). The short motif at 124–129 (VHYNFR) is the Cholesterol-binding sequence motif element. Residues asparagine 140, asparagine 174, and asparagine 257 are each glycosylated (N-linked (GlcNAc...) asparagine). Residues 269 to 289 (YTIPIVFWACILLLVTIVVFV) traverse the membrane as a helical segment. At 290–373 (YHYFDGIWER…YEERELKYDV (84 aa)) the chain is on the cytoplasmic side. The chain crosses the membrane as a helical span at residues 374–394 (YKIALAIIGIFYNITVLQLII). The Extracellular portion of the chain corresponds to 395–421 (SKAGSLRQSGDLDECTFNFQCARPLWY). Residues 422–442 (FVAFNNVVSNGGYVYFGTLII) traverse the membrane as a helical segment. The Cytoplasmic segment spans residues 443–473 (VMNYCRERSFRRLFAVQPTLAERYGLPQHSG). The chain crosses the membrane as a helical span at residues 474-494 (LMTAIGLAVIMEGISSATYHV). The Extracellular segment spans residues 495–498 (CPNN). A helical membrane pass occupies residues 499–517 (INYQFDTALMYVIGMLGKL). Over 518 to 530 (KIWSLRHPDMVVS) the chain is Cytoplasmic. A helical transmembrane segment spans residues 531 to 551 (AYHAFGFLGVFLMAAIAGVYV). Residues 552–554 (HNM) are Extracellular-facing. A helical transmembrane segment spans residues 555–575 (IFWALFSIIYIASMLLVSLEF). Positions 570-578 (LVSLEFYFK) match the Cholesterol-binding sequence motif motif. The Cytoplasmic portion of the chain corresponds to 576–612 (YFKGIWTLNLRELRNSIRLSWVSSRHLSCVVPAYKAR). Residues 613–633 (FFVILLLNIANTAVVVYGLEA) form a helical membrane-spanning segment. The Extracellular segment spans residues 634 to 637 (HPKD). A helical membrane pass occupies residues 638-658 (FLSFLLIPFIGNLFIYIIYYI). At 659–671 (LMKMIYREKIPKR) the chain is on the cytoplasmic side. A helical transmembrane segment spans residues 672 to 692 (AIALLFAAVISWTCAGILFNQ). Residues 693–728 (RVSDWSKMPAISRELNKPCIFLNFYDNHDLWHLSSA) lie on the Extracellular side of the membrane. Residues 729–749 (FAIFFSFTAINVIDDDLMFVM) traverse the membrane as a helical segment. Residues 750–756 (RNTIRVF) are Cytoplasmic-facing.

Belongs to the SID1 family. As to expression, highly expressed along the intestine with expression also detected in the pharynx, especially at the terminal bulb, and in the excretory gland cells.

It is found in the cell membrane. It carries out the reaction cholesterol(in) = cholesterol(out). Cholesterol-binding protein which is involved in dietary cholesterol uptake from the environment. Does not play a role in double-stranded RNA transport in contrast to other SID1 family members. The protein is Cholesterol uptake protein 1 of Caenorhabditis elegans.